The chain runs to 188 residues: Peptidyl-tRNA hydrolase (188 aa).

A tRNA-binding site is contributed by Tyr-15. His-20 (proton acceptor) is an active-site residue. Residues Tyr-64, Asn-66, and Asn-112 each contribute to the tRNA site.

It belongs to the PTH family. In terms of assembly, monomer.

Its subcellular location is the cytoplasm. It carries out the reaction an N-acyl-L-alpha-aminoacyl-tRNA + H2O = an N-acyl-L-amino acid + a tRNA + H(+). In terms of biological role, hydrolyzes ribosome-free peptidyl-tRNAs (with 1 or more amino acids incorporated), which drop off the ribosome during protein synthesis, or as a result of ribosome stalling. Catalyzes the release of premature peptidyl moieties from peptidyl-tRNA molecules trapped in stalled 50S ribosomal subunits, and thus maintains levels of free tRNAs and 50S ribosomes. The polypeptide is Peptidyl-tRNA hydrolase (Cytophaga hutchinsonii (strain ATCC 33406 / DSM 1761 / CIP 103989 / NBRC 15051 / NCIMB 9469 / D465)).